Reading from the N-terminus, the 237-residue chain is Sensory rhodopsin-2 (237 aa).

Topologically, residues 1-2 (MA) are extracellular. Residues 3-23 (LTTWFWVGAVGMLAGTVLPIR) traverse the membrane as a helical segment. Residues 24–31 (DCIRHPSH) are Cytoplasmic-facing. The helical transmembrane segment at 32-53 (RRYDLVLAGITGLAAIAYTTMG) threads the bilayer. Residues 54–67 (LGITATTVGDRTVY) lie on the Extracellular side of the membrane. The helical transmembrane segment at 68 to 89 (LARYIDWLVTTPLIVLYLAMLA) threads the bilayer. The Cytoplasmic segment spans residues 90 to 92 (RPG). Residues 93–115 (HRTSAWLLAADVFVIAAGIAAAL) form a helical membrane-spanning segment. At 116 to 119 (TTGV) the chain is on the extracellular side. A helical transmembrane segment spans residues 120–147 (QRWLFFAVGAAGYAALLYGLLGTLPRAL). The Cytoplasmic segment spans residues 148–150 (GDD). Residues 151-178 (PRVRSLFVTLRNITVVLWTLYPVVWLLS) traverse the membrane as a helical segment. The Extracellular portion of the chain corresponds to 179-186 (PAGIGILQ). A helical membrane pass occupies residues 187–214 (TEMYTIVVVYLDFISKVAFVAFAVLGAD). Residue lysine 202 is modified to N6-(retinylidene)lysine. The Cytoplasmic segment spans residues 215 to 237 (AVSRLVAADAAAPATAEPTPDGD).

This sequence belongs to the archaeal/bacterial/fungal opsin family. Interacts with HTR-II.

It localises to the cell membrane. Its function is as follows. Photophobic photoreceptor responsible for the negative phototaxis. Activates the sensory rhodopsin II transducer (HTR-II) in response to blue light. The polypeptide is Sensory rhodopsin-2 (sop2) (Halobacterium salinarum (strain ATCC 700922 / JCM 11081 / NRC-1) (Halobacterium halobium)).